The chain runs to 253 residues: Phosphoribosylaminoimidazole-succinocarboxamide synthase (253 aa).

It belongs to the SAICAR synthetase family.

The enzyme catalyses 5-amino-1-(5-phospho-D-ribosyl)imidazole-4-carboxylate + L-aspartate + ATP = (2S)-2-[5-amino-1-(5-phospho-beta-D-ribosyl)imidazole-4-carboxamido]succinate + ADP + phosphate + 2 H(+). The protein operates within purine metabolism; IMP biosynthesis via de novo pathway; 5-amino-1-(5-phospho-D-ribosyl)imidazole-4-carboxamide from 5-amino-1-(5-phospho-D-ribosyl)imidazole-4-carboxylate: step 1/2. This is Phosphoribosylaminoimidazole-succinocarboxamide synthase from Roseobacter denitrificans (strain ATCC 33942 / OCh 114) (Erythrobacter sp. (strain OCh 114)).